The chain runs to 64 residues: Large ribosomal subunit protein bL35 (64 aa).

The span at 1-14 (MKQKTHKGTAKRIK) shows a compositional bias: basic residues. The disordered stretch occupies residues 1-48 (MKQKTHKGTAKRIKVTGSGKLRREQANRRHLLEGKPSKRTRRLKGTED). Residues 21-36 (LRREQANRRHLLEGKP) are compositionally biased toward basic and acidic residues.

Belongs to the bacterial ribosomal protein bL35 family.

In Corynebacterium aurimucosum (strain ATCC 700975 / DSM 44827 / CIP 107346 / CN-1) (Corynebacterium nigricans), this protein is Large ribosomal subunit protein bL35.